Consider the following 449-residue polypeptide: MSVWQQGATIELRIDSLSHTGEGVGRWQDRVVFVADTVPGDRLRVRLTHVKRQYAHGKVLEVVQPSGQRVRPNCIVADKCGGCQWQRVAYATQLAAKEQLVKDAIARIGHLEPQAFLPILAAPNPFGYRNKVTYPLGRRHGAVVAGYYQKGSHHLVNLNQCPVQDPRLNPLLAALKQALQPWPIYREQTHEPGFRHLGLRIGQRTGEQLITLVLAGPLPAGLAAEAEGWLQRFQGVIGVCVNFNHHVGNRIFGDETQVLAGRPYLWEEMAGVRFQIASTTFFQVNTAQAEQLVTTLRDWIAPTGQERLVDLYCGVGTLSLPLAGAVAEVIGVEVHSASVQQAIANAQHNGINNAHFVCAKAEEWLPRYDQAVDVLILDPPRKGCDRAVLDAILHNCPPRLLYVSCHPATLARDLAHLCSTGTYQLAKIQPLDMFPQTAHVETIALLTTS.

The TRAM domain occupies 3–61; it reads VWQQGATIELRIDSLSHTGEGVGRWQDRVVFVADTVPGDRLRVRLTHVKRQYAHGKVLE. Cys-74, Cys-80, Cys-83, and Cys-161 together coordinate [4Fe-4S] cluster. 4 residues coordinate S-adenosyl-L-methionine: Gln-283, Tyr-312, Glu-333, and Asp-378. Cys-405 (nucleophile) is an active-site residue.

Belongs to the class I-like SAM-binding methyltransferase superfamily. RNA M5U methyltransferase family.

This is an uncharacterized protein from Thermosynechococcus vestitus (strain NIES-2133 / IAM M-273 / BP-1).